The chain runs to 264 residues: Apolipoprotein A-I (264 aa).

Positions 1–18 (MKAVVLAVAVLFLTGSQA) are cleaved as a signal peptide. Repeat copies occupy residues 67-88 (LNLL…EQLG) and 89-110 (PVTR…QEMN). Residues 67–264 (LNLLENWDTF…DEATQKLNTQ (198 aa)) form a 10 X approximate tandem repeats region. Met109 carries the post-translational modification Methionine sulfoxide. One copy of the 3; half-length repeat lies at 111–121 (KDLEEVKQKVQ). 3 consecutive repeat copies span residues 122–143 (PYLD…PKVE), 144–165 (PLGA…KQLV), and 166–187 (PLGE…TKLA). Residues 188–207 (PYSDQMRDRLAERLTALRDN) form a 7; truncated repeat. At Met193 the chain carries Methionine sulfoxide. Repeat unit 8 spans residues 208–229 (PKLAEYHARATEHLKKLGEKTK). The stretch at 230-240 (PTLEDLRQGLM) is one 9; half-length repeat. Met240 is subject to Methionine sulfoxide. Residues 241–264 (PWLESLKAKALSVLDEATQKLNTQ) form repeat 10.

Belongs to the apolipoprotein A1/A4/E family. As to quaternary structure, homodimer. Interacts with APOA1BP and CLU. Component of a sperm activating protein complex (SPAP), consisting of APOA1, an immunoglobulin heavy chain, an immunoglobulin light chain and albumin. Interacts with NDRG1. Interacts with SCGB3A2. Interacts with NAXE and YJEFN3. Glycosylated. Post-translationally, palmitoylated. In terms of processing, phosphorylation sites are present in the extracellular medium.

The protein localises to the secreted. Participates in the reverse transport of cholesterol from tissues to the liver for excretion by promoting cholesterol efflux from tissues and by acting as a cofactor for the lecithin cholesterol acyltransferase (LCAT). As part of the SPAP complex, activates spermatozoa motility. The protein is Apolipoprotein A-I (Apoa1) of Nannospalax galili (Northern Israeli blind subterranean mole rat).